We begin with the raw amino-acid sequence, 414 residues long: Na(+)-translocating NADH-quinone reductase subunit B (414 aa).

4 helical membrane-spanning segments follow: residues 56-76, 82-104, 129-149, and 164-184; these read IMIM…YNVG, ALNH…HYWL, FLPI…LFCM, and ILFA…LGIT. T236 carries the FMN phosphoryl threonine modification. Transmembrane regions (helical) follow at residues 275–295, 297–317, 325–345, 358–378, and 381–401; these read VSTL…IASW, IIAG…VIGS, MPWH…FMAT, WAYG…NPAY, and GMML…HIVI.

This sequence belongs to the NqrB/RnfD family. Composed of six subunits; NqrA, NqrB, NqrC, NqrD, NqrE and NqrF. It depends on FMN as a cofactor.

The protein localises to the cell inner membrane. It catalyses the reaction a ubiquinone + n Na(+)(in) + NADH + H(+) = a ubiquinol + n Na(+)(out) + NAD(+). NQR complex catalyzes the reduction of ubiquinone-1 to ubiquinol by two successive reactions, coupled with the transport of Na(+) ions from the cytoplasm to the periplasm. NqrA to NqrE are probably involved in the second step, the conversion of ubisemiquinone to ubiquinol. The protein is Na(+)-translocating NADH-quinone reductase subunit B of Vibrio anguillarum (Listonella anguillarum).